The chain runs to 155 residues: Protein SprT-like (155 aa).

The 138-residue stretch at 7 to 144 (QRHMEEVSLQ…CGSCGGKLKQ (138 aa)) folds into the SprT-like domain. H67 is a Zn(2+) binding site. E68 is a catalytic residue. A Zn(2+)-binding site is contributed by H71.

It belongs to the SprT family. Requires Zn(2+) as cofactor.

The protein localises to the cytoplasm. In Listeria welshimeri serovar 6b (strain ATCC 35897 / DSM 20650 / CCUG 15529 / CIP 8149 / NCTC 11857 / SLCC 5334 / V8), this protein is Protein SprT-like.